The sequence spans 79 residues: MPTRTISISEEAYERLKSLKTSEKDSFSDVILKYYPRKRKLSEVLAEIGSNPELADAIEKASRDMRKAKMRNVDLDAGA.

Belongs to the UPF0330 family.

Its function is as follows. Possibly the antitoxin component of a type II toxin-antitoxin (TA) system. In Methanosarcina mazei (strain ATCC BAA-159 / DSM 3647 / Goe1 / Go1 / JCM 11833 / OCM 88) (Methanosarcina frisia), this protein is Putative antitoxin MM_2475.